Reading from the N-terminus, the 210-residue chain is Probable membrane protein MT1774 (210 aa).

Transmembrane regions (helical) follow at residues 43–63 (AVVM…AAAA) and 165–185 (ALAA…LLAL).

The protein localises to the cell membrane. This chain is Probable membrane protein MT1774, found in Mycobacterium tuberculosis (strain CDC 1551 / Oshkosh).